Consider the following 613-residue polypeptide: Autophagy-related protein 22-2 (613 aa).

The interval 1-30 (MAFNSTPPVSPGGEAQQRPPRFPGEDTTPT) is disordered. A helical transmembrane segment spans residues 41-61 (YGIAAEVFAVCGVGSFLPLTL). An N-linked (GlcNAc...) asparagine glycan is attached at asparagine 90. 7 helical membrane-spanning segments follow: residues 120 to 140 (SFAM…LISF), 167 to 187 (LFIF…VVGV), 189 to 209 (CLGS…ANDP), 278 to 298 (VGLG…MLFA), 307 to 327 (ISGT…WFSF), 382 to 402 (VIIF…VSGT), and 418 to 438 (VGLL…LWPV). Residue asparagine 448 is glycosylated (N-linked (GlcNAc...) asparagine). The next 4 membrane-spanning stretches (helical) occupy residues 453–473 (LCIA…IPLF), 477–497 (GVVG…HGLV), 508–528 (FFGL…YAAT), and 553–573 (GFFF…MVNA). Positions 592–613 (REHASEYGGPSEEAEGLLARDI) are disordered.

Belongs to the ATG22 family.

It is found in the vacuole membrane. In terms of biological role, vacuolar effluxer which mediate the efflux of amino acids resulting from autophagic degradation. The release of autophagic amino acids allows the maintenance of protein synthesis and viability during nitrogen starvation. In Aspergillus fumigatus (strain ATCC MYA-4609 / CBS 101355 / FGSC A1100 / Af293) (Neosartorya fumigata), this protein is Autophagy-related protein 22-2 (atg22-2).